A 431-amino-acid chain; its full sequence is Serine hydroxymethyltransferase (431 aa).

Residue 121–123 coordinates (6S)-5,6,7,8-tetrahydrofolate; it reads AHV. The residue at position 227 (Lys-227) is an N6-(pyridoxal phosphate)lysine.

Belongs to the SHMT family. As to quaternary structure, homodimer. The cofactor is pyridoxal 5'-phosphate.

The protein resides in the cytoplasm. The protein operates within amino-acid biosynthesis; glycine biosynthesis; glycine from L-serine: step 1/1. Its function is as follows. Catalyzes the reversible interconversion of serine and glycine with a modified folate serving as the one-carbon carrier. Also exhibits a pteridine-independent aldolase activity toward beta-hydroxyamino acids, producing glycine and aldehydes, via a retro-aldol mechanism. The sequence is that of Serine hydroxymethyltransferase from Metallosphaera sedula (strain ATCC 51363 / DSM 5348 / JCM 9185 / NBRC 15509 / TH2).